Reading from the N-terminus, the 590-residue chain is MIPASMEEAHQLESRSDDLSQRRSYWRWRKQDFFPEFSFQSFSTYKSALSATCPRLADRLLSRSSDAYELDAARRESENPMRRCLTWWDLLWLSFGSVVGSGVFVITGQEARVGAGPAVVLSYAISGVSALLSVLCYAEFGVEIPVAGGSFSYLRVELGDFIAFIAAGNILLEAMVGAAGLGRSWSSYLASLVKNDSDYFRIKVDSFAKGFDLLDPVAVAVLLVANGIAMTGTKRTSWLNLITSMVTVCIIVFIVVVGFTHSKTSNLVPFFPYGAKGVVQSAAVVYWSYTGFDMVANMAEETEKPSRDIPIGLVGSMSMITVVYCLMALALTMMVKYTEIDANAAYSVAFAQIGMKWAKYLVGICALKGMTTSLLVGSLGQARYTTQIARSHMIPPWFALVHPKTGTPIYATLLVTILSSIISFFTSLEVLSSVFSFATLFIFMLVAVALLVRRYYVKDVTPEAGLLKFLGFLFLIIASSIGVSALWNSGVKGWIAYTVTGVIWFIGTLGLALLPKYRVPKVWGVPLVPWLPSFSIAMNLFLIGSLGYVAFLRFIICTMVMLLYYLFVGLHATYDVAHQPLEEAKFEGER.

At 1-85 (MIPASMEEAH…ESENPMRRCL (85 aa)) the chain is on the cytoplasmic side. Residues 86–106 (TWWDLLWLSFGSVVGSGVFVI) traverse the membrane as a helical segment. The Vacuolar segment spans residues 107 to 114 (TGQEARVG). A helical transmembrane segment spans residues 115 to 135 (AGPAVVLSYAISGVSALLSVL). Topologically, residues 136 to 160 (CYAEFGVEIPVAGGSFSYLRVELGD) are cytoplasmic. The chain crosses the membrane as a helical span at residues 161–181 (FIAFIAAGNILLEAMVGAAGL). Residues 182 to 209 (GRSWSSYLASLVKNDSDYFRIKVDSFAK) are Vacuolar-facing. N-linked (GlcNAc...) asparagine glycosylation occurs at Asn-195. Residues 210 to 230 (GFDLLDPVAVAVLLVANGIAM) form a helical membrane-spanning segment. The Cytoplasmic portion of the chain corresponds to 231–238 (TGTKRTSW). Residues 239–259 (LNLITSMVTVCIIVFIVVVGF) traverse the membrane as a helical segment. At 260 to 266 (THSKTSN) the chain is on the vacuolar side. Residues 267–287 (LVPFFPYGAKGVVQSAAVVYW) form a helical membrane-spanning segment. At 288 to 310 (SYTGFDMVANMAEETEKPSRDIP) the chain is on the cytoplasmic side. The helical transmembrane segment at 311–331 (IGLVGSMSMITVVYCLMALAL) threads the bilayer. Topologically, residues 332-359 (TMMVKYTEIDANAAYSVAFAQIGMKWAK) are vacuolar. A helical membrane pass occupies residues 360-380 (YLVGICALKGMTTSLLVGSLG). At 381-407 (QARYTTQIARSHMIPPWFALVHPKTGT) the chain is on the cytoplasmic side. Residues 408–428 (PIYATLLVTILSSIISFFTSL) traverse the membrane as a helical segment. Position 429 (Glu-429) is a topological domain, vacuolar. Residues 430 to 450 (VLSSVFSFATLFIFMLVAVAL) traverse the membrane as a helical segment. Over 451–465 (LVRRYYVKDVTPEAG) the chain is Cytoplasmic. The helical transmembrane segment at 466 to 486 (LLKFLGFLFLIIASSIGVSAL) threads the bilayer. The Vacuolar portion of the chain corresponds to 487–493 (WNSGVKG). The chain crosses the membrane as a helical span at residues 494–514 (WIAYTVTGVIWFIGTLGLALL). The Cytoplasmic portion of the chain corresponds to 515 to 522 (PKYRVPKV). Residues 523-543 (WGVPLVPWLPSFSIAMNLFLI) traverse the membrane as a helical segment. Over 544–553 (GSLGYVAFLR) the chain is Vacuolar. The chain crosses the membrane as a helical span at residues 554 to 574 (FIICTMVMLLYYLFVGLHATY). The Cytoplasmic segment spans residues 575 to 590 (DVAHQPLEEAKFEGER).

The protein belongs to the amino acid-polyamine-organocation (APC) superfamily. Cationic amino acid transporter (CAT) (TC 2.A.3.3) family. Expressed in roots, stems, flowers and leaves. Mostly present in young and rapidly dividing tissues such as the shoot and root apical meristem, and in young leaves and petioles during seedling development.

Its subcellular location is the cell membrane. Permease involved in the transport of the cationic neutral or acidic amino acids. The protein is Cationic amino acid transporter 8, vacuolar (CAT8) of Arabidopsis thaliana (Mouse-ear cress).